The following is a 204-amino-acid chain: Ras-related protein RabQ (204 aa).

12-19 contacts GTP; that stretch reads GPPFVGKS. The short motif at 34–42 is the Effector region element; that stretch reads MDTTIGVEF. GTP contacts are provided by residues 60–64 and 118–121; these read DTAGQ and NKCD. 2 S-geranylgeranyl cysteine lipidation sites follow: cysteine 202 and cysteine 203.

Belongs to the small GTPase superfamily. Rab family.

Its subcellular location is the cell membrane. This Dictyostelium discoideum (Social amoeba) protein is Ras-related protein RabQ (rabQ).